Consider the following 379-residue polypeptide: tRNA-specific 2-thiouridylase MnmA (379 aa).

Residues 23–30 (AMSGGVDS) and L49 contribute to the ATP site. The active-site Nucleophile is C117. An intrachain disulfide couples C117 to C214. Residue G141 coordinates ATP. The segment at 163–165 (RDQ) is interaction with tRNA. Residue C214 is the Cysteine persulfide intermediate of the active site.

It belongs to the MnmA/TRMU family.

It localises to the cytoplasm. The enzyme catalyses S-sulfanyl-L-cysteinyl-[protein] + uridine(34) in tRNA + AH2 + ATP = 2-thiouridine(34) in tRNA + L-cysteinyl-[protein] + A + AMP + diphosphate + H(+). Catalyzes the 2-thiolation of uridine at the wobble position (U34) of tRNA, leading to the formation of s(2)U34. This chain is tRNA-specific 2-thiouridylase MnmA, found in Cereibacter sphaeroides (strain ATCC 17023 / DSM 158 / JCM 6121 / CCUG 31486 / LMG 2827 / NBRC 12203 / NCIMB 8253 / ATH 2.4.1.) (Rhodobacter sphaeroides).